The sequence spans 372 residues: 3-galactosyl-N-acetylglucosaminide 4-alpha-L-fucosyltransferase FUT3 (372 aa).

Topologically, residues 1 to 15 (MDPLGAAKTQWPWRR) are cytoplasmic. A helical; Signal-anchor for type II membrane protein transmembrane segment spans residues 16–34 (CLAALLFQLLVAVCFFSYL). Over 35-372 (RVSRDDATGS…MVRSIAAWFT (338 aa)) the chain is Lumenal. Residues 40–68 (DATGSPRPGLMAVEPVTGAPGGSSRQDTT) are disordered. N165 and N196 each carry an N-linked (GlcNAc...) asparagine glycan.

It belongs to the glycosyltransferase 10 family. Post-translationally, glycosylated.

It is found in the golgi apparatus. It localises to the golgi stack membrane. The catalysed reaction is a beta-D-galactosyl-(1-&gt;3)-N-acetyl-beta-D-glucosaminyl derivative + GDP-beta-L-fucose = a beta-D-galactosyl-(1-&gt;3)-[alpha-L-fucosyl-(1-&gt;4)]-N-acetyl-beta-D-glucosaminyl derivative + GDP + H(+). It catalyses the reaction an N-acetyl-alpha-neuraminyl-(2-&gt;3)-beta-D-galactosyl-(1-&gt;4)-N-acetyl-beta-D-glucosaminyl derivative + GDP-beta-L-fucose = an alpha-Neu5Ac-(2-&gt;3)-beta-D-Gal-(1-&gt;4)-[alpha-L-Fuc-(1-&gt;3)]-beta-D-GlcNAc derivative + GDP + H(+). It carries out the reaction a beta-D-galactosyl-(1-&gt;4)-N-acetyl-beta-D-glucosaminyl derivative + GDP-beta-L-fucose = a beta-D-galactosyl-(1-&gt;4)-[alpha-L-fucosyl-(1-&gt;3)]-N-acetyl-beta-D-glucosaminyl derivative + GDP + H(+). The enzyme catalyses an alpha-Neu5Ac-(2-&gt;3)-beta-D-Gal-(1-&gt;4)-beta-D-GlcNAc-(1-&gt;3)-beta-D-Gal-(1-&gt;4)-[alpha-L-Fuc-(1-&gt;3)]-beta-D-GlcNAc derivative + GDP-beta-L-fucose = an alpha-Neu5Ac-(2-&gt;3)-beta-D-Gal-(1-&gt;4)-[alpha-L-Fuc-(1-&gt;3)]-beta-D-GlcNAc-(1-&gt;3)-beta-D-Gal-(1-&gt;4)-[alpha-L-Fuc-(1-&gt;3)]-beta-D-GlcNAc derivative + GDP + H(+). The catalysed reaction is Lc4Cer + GDP-beta-L-fucose = a lactoside III(4)-a-Fuc-Lc4Cer + GDP + H(+). It catalyses the reaction a beta-D-Gal-(1-&gt;3)-beta-D-GlcNAc-(1-&gt;3)-beta-D-Gal-(1-&gt;4)-beta-D-Glc-(1&lt;-&gt;1')-Cer(d18:1(4E)) + GDP-beta-L-fucose = a III(4)-a-Fuc-Lc4Cer(d18:1(4E)) + GDP + H(+). It carries out the reaction N-acetyl-alpha-neuraminosyl-(2-&gt;3)-beta-D-galactosyl-(1-&gt;3)-[N-acetyl-alpha-neuraminosyl-(2-&gt;6)]-N-acetyl-beta-D-glucosaminyl-(1-&gt;3)-beta-D-galactosyl-(1-&gt;4)-beta-D-glucosyl-(1&lt;-&gt;1')-N-acyl-sphing-4-enine + GDP-beta-L-fucose = N-acetyl-alpha-neuraminosyl-(2-&gt;3)-beta-D-galactosyl-(1-&gt;3)-alpha-L-fucosyl-(1-&gt;4)-[N-acetyl-alpha-neuraminosyl-(2-&gt;6)-N-acetyl-beta-D-glucosaminyl-(1-&gt;3)]-beta-D-galactosyl-(1-&gt;4)-beta-D-glucosyl-(1&lt;-&gt;1')-N-acyl-sphing-4-enine + GDP + H(+). The enzyme catalyses N-acetyl-alpha-neuraminosyl-(2-&gt;3)-beta-D-galactosyl-(1-&gt;3)-N-acetyl-beta-D-glucosaminyl-(1-&gt;3)-beta-D-galactosyl-(1-&gt;4)-beta-D-glucosyl-(1&lt;-&gt;1')-N-acyl-sphing-4-enine + GDP-beta-L-fucose = N-acetyl-alpha-neuraminosyl-(2-&gt;3)-beta-D-galactosyl-(1-&gt;3)-alpha-L-fucosyl-(1-&gt;4)-[N-acetyl-beta-D-glucosaminyl-(1-&gt;3)]-beta-D-galactosyl-(1-&gt;4)-beta-D-glucosyl-(1&lt;-&gt;1')-N-acyl-sphing-4-enine + GDP + H(+). The catalysed reaction is beta-D-galactosyl-(1-&gt;3)-N-acetyl-D-glucosamine + GDP-beta-L-fucose = beta-D-galactosyl-(1-&gt;3)-[alpha-L-fucosyl-(1-&gt;4)]-N-acetyl-D-glucosamine + GDP + H(+). It catalyses the reaction alpha-L-Fuc-(1-&gt;2)-beta-D-Gal-(1-&gt;3)-D-GlcNAc + GDP-beta-L-fucose = alpha-L-Fuc-(1-&gt;2)-beta-D-Gal-(1-&gt;3)-[alpha-L-Fuc-(1-&gt;4)]-D-GlcNAc + GDP + H(+). It carries out the reaction alpha-L-Fuc-(1-&gt;2)-beta-D-Gal-(1-&gt;4)-D-GlcNAc + GDP-beta-L-fucose = alpha-L-Fuc-(1-&gt;2)-beta-D-Gal-(1-&gt;4)-[alpha-L-Fuc-(1-&gt;3)]-D-GlcNAc + GDP + H(+). The enzyme catalyses beta-D-galactosyl-(1-&gt;4)-N-acetyl-D-glucosamine + GDP-beta-L-fucose = beta-D-galactosyl-(1-&gt;4)-[alpha-L-fucosyl-(1-&gt;3)]-N-acetyl-D-glucosamine + GDP + H(+). The catalysed reaction is lactose + GDP-beta-L-fucose = beta-D-galactosyl-(1-&gt;4)-[alpha-L-fucosyl-(1-&gt;3)]-D-glucose + GDP + H(+). It catalyses the reaction an alpha-Neu5Ac-(2-&gt;3)-beta-D-Gal-(1-&gt;3)-D-GlcNAc derivative + GDP-beta-L-fucose = an alpha-Neu5Ac-(2-&gt;3)-beta-D-Gal-(1-&gt;3)-[alpha-L-Fuc-(1-&gt;4)]-beta-D-GlcNAc derivative + GDP + H(+). Its pathway is protein modification; protein glycosylation. In terms of biological role, catalyzes the transfer of L-fucose, from a guanosine diphosphate-beta-L-fucose, to both the subterminal N-acetyl glucosamine (GlcNAc) of type 1 chain (beta-D-Gal-(1-&gt;3)-beta-D-GlcNAc) glycolipids and oligosaccharides via an alpha(1,4) linkage, and the subterminal glucose (Glc) or GlcNAc of type 2 chain (beta-D-Gal-(1-&gt;4)-beta-D-GlcNAc) oligosaccharides via an alpha(1,3) linkage, independently of the presence of terminal alpha-L-fucosyl-(1,2) moieties on the terminal galactose of these acceptors and participates in the blood groups Lewis determination and expression of Lewis a (Le(a)), lewis b (Le(b)), Lewis x/SSEA-1 (Le(x)) and lewis y (Le(y)) antigens. Also catalyzes the transfer of L-fucose to subterminal GlcNAc of sialyl- and disialyl-lactotetraosylceramide to produce sialyl Lewis a (sLe(a)) and disialyl Lewis a via an alpha(1,4) linkage and therefore may regulate cell surface sialyl Lewis a expression and consequently regulates adhesive properties to E-selectin, cell proliferation and migration. Catalyzes the transfer of an L-fucose to 3'-sialyl-N-acetyllactosamine by an alpha(1,3) linkage, which allows the formation of sialyl-Lewis x structure and therefore may regulate the sialyl-Lewis x surface antigen expression and consequently adhesive properties to E-selectin. Prefers type 1 chain over type 2 acceptors. Type 1 tetrasaccharide is a better acceptor than type 1 disaccharide suggesting that a beta anomeric configuration of GlcNAc in the substrate is preferred. Lewis-positive (Le(+)) individuals have an active enzyme while Lewis-negative (Le(-)) individuals have an inactive enzyme. The chain is 3-galactosyl-N-acetylglucosaminide 4-alpha-L-fucosyltransferase FUT3 from Pongo pygmaeus (Bornean orangutan).